The chain runs to 684 residues: Pentatricopeptide repeat-containing protein At4g14850 (684 aa).

PPR repeat units lie at residues 5 to 39, 41 to 71, 72 to 106, 107 to 141, 142 to 172, 173 to 207, 208 to 242, 243 to 277, 278 to 308, 309 to 343, 344 to 374, 375 to 409, 412 to 442, and 448 to 478; these read SADA…LDSP, PPFL…TPAR, NVVS…GVVP, NDFT…GRIL, DVFV…IPER, NLET…DGHP, NSIT…GFDT, DVSV…NAVS, WCSL…IVET, SDFM…CVER, TIFV…MPEK, NLVT…GCGP, NYMT…MRST, and GAEH…MPIQ. The interval 483–558 is type E motif; degenerate; sequence VWGALQNACR…GAGYSWITVK (76 aa). Residues 559 to 589 form a type E(+) motif; degenerate region; sequence NQVHAFQAKDRSHILNKEIQTTLAKLRNEME. The tract at residues 590-684 is type DYW motif; that stretch reads AAGYKPDLKL…DGICSCKDYW (95 aa).

This sequence belongs to the PPR family. PCMP-H subfamily.

Its function is as follows. Acts as a regulatory factor of isoprenoid biosynthesis. Could bind RNA. The protein is Pentatricopeptide repeat-containing protein At4g14850 (LOI1) of Arabidopsis thaliana (Mouse-ear cress).